Consider the following 165-residue polypeptide: Phosphopantetheine adenylyltransferase (165 aa).

Residue Thr9 coordinates substrate. Residues 9 to 10 and His17 contribute to the ATP site; that span reads TF. Positions 41, 73, and 87 each coordinate substrate. Residues 88–90, Glu98, and 123–129 contribute to the ATP site; these read GLR and YQFISGT.

The protein belongs to the bacterial CoaD family. In terms of assembly, homohexamer. It depends on Mg(2+) as a cofactor.

It is found in the cytoplasm. It carries out the reaction (R)-4'-phosphopantetheine + ATP + H(+) = 3'-dephospho-CoA + diphosphate. It participates in cofactor biosynthesis; coenzyme A biosynthesis; CoA from (R)-pantothenate: step 4/5. In terms of biological role, reversibly transfers an adenylyl group from ATP to 4'-phosphopantetheine, yielding dephospho-CoA (dPCoA) and pyrophosphate. This Burkholderia orbicola (strain MC0-3) protein is Phosphopantetheine adenylyltransferase.